The primary structure comprises 611 residues: MSITKLARSNAFKPIPNFVRSSLRNAGVESSQNTEYPPYKPKKHHILATNLIVSYFEKGLVEEARSLFDEMPDRDVVAWTAMITGYASSNYNARAWECFHEMVKQGTSPNEFTLSSVLKSCRNMKVLAYGALVHGVVVKLGMEGSLYVDNAMMNMYATCSVTMEAACLIFRDIKVKNDVTWTTLITGFTHLGDGIGGLKMYKQMLLENAEVTPYCITIAVRASASIDSVTTGKQIHASVIKRGFQSNLPVMNSILDLYCRCGYLSEAKHYFHEMEDKDLITWNTLISELERSDSSEALLMFQRFESQGFVPNCYTFTSLVAACANIAALNCGQQLHGRIFRRGFNKNVELANALIDMYAKCGNIPDSQRVFGEIVDRRNLVSWTSMMIGYGSHGYGAEAVELFDKMVSSGIRPDRIVFMAVLSACRHAGLVEKGLKYFNVMESEYGINPDRDIYNCVVDLLGRAGKIGEAYELVERMPFKPDESTWGAILGACKAHKHNGLISRLAARKVMELKPKMVGTYVMLSYIYAAEGKWVDFARVRKMMRMMGNKKEAGMSWILVENQVFSFAVSDKMCPNASSVYSVLGLLIEETREAGYVPELDSLVNDQEVGT.

PPR repeat units lie at residues His44–Arg74, Asp75–Pro109, Asn110–Gly144, Ser145–Lys176, Asn177–Val211, Thr212–Ser246, Asn247–Thr281, Trp282–Pro311, Asn312–Lys346, Asn347–Arg377, Asn379–Pro413, Asp414–Glu444, and Asp450–Lys480. The tract at residues Thr485 to Glu561 is type E motif. The segment at Asn562 to Arg592 is type E(+) motif.

The protein belongs to the PPR family. PCMP-E subfamily.

The protein is Putative pentatricopeptide repeat-containing protein At1g56570 (PCMP-E64) of Arabidopsis thaliana (Mouse-ear cress).